The sequence spans 420 residues: C-methyltransferase NovU (420 aa).

Belongs to the methyltransferase superfamily.

It functions in the pathway antibiotic biosynthesis; novobiocin biosynthesis. In terms of biological role, C-methyltransferase that acts together with NovW to catalyze the formation of dTDP-4-keto-6-deoxy-5-C-methyl-L-lyxo-hexose from dTDP-4-keto-6-deoxy-D-glucose in the novobiocin biosynthesis pathway, an aminocoumarin family antibiotic that targets bacterial DNA gyrases. This is C-methyltransferase NovU (novU) from Streptomyces niveus (Streptomyces spheroides).